The sequence spans 395 residues: Probable G-protein coupled receptor npr-29 (395 aa).

The next 4 membrane-spanning stretches (helical) occupy residues Val38–Pro58, Ile66–Leu86, Ile89–Phe109, and Ala148–Ala168. Asn180 is a glycosylation site (N-linked (GlcNAc...) asparagine). 3 helical membrane passes run Phe202–Tyr222, Val252–Val272, and Ile287–Leu307.

The protein belongs to the G-protein coupled receptor 1 family.

The protein resides in the cell membrane. Its function is as follows. Not known. Putative receptor. This Caenorhabditis elegans protein is Probable G-protein coupled receptor npr-29.